A 2715-amino-acid polypeptide reads, in one-letter code: G surface protein, allelic form 156 (2715 aa).

The N-terminal stretch at 1–20 (MNNKFIIFSLLLALVASQTY) is a signal peptide. PSA repeat units follow at residues 111 to 171 (KTLD…NTCD), 177 to 237 (FATD…RICD), 243 to 303 (LTTD…KACA), 309 to 366 (IATN…KTCA), 372 to 404 (NNTHDLCTSYLSTCTVKSGGGCQNRTCANAPTT), 405 to 467 (MTTN…KTCV), 473 to 530 (NTTH…KQCV), 536 to 596 (TTTH…KACS), 602 to 673 (FTTT…KSCA), 688 to 748 (GFTF…KTCA), 752 to 812 (QTTH…ATCA), 820 to 895 (YDSD…GACT), 934 to 1001 (GLTF…AECA), 1008 to 1067 (GLDH…SNCA), 1073 to 1141 (GLTT…THCP), 1147 to 1215 (GLTD…TECA), 1221 to 1289 (GLTD…TECA), 1295 to 1363 (GLTN…TECA), 1369 to 1437 (GLTN…TECA), 1443 to 1507 (GLTK…LNCS), 1513 to 1578 (GFVH…TDCA), 1586 to 1652 (TITF…ATCD), 1693 to 1751 (TFNH…KTCD), 1759 to 1819 (RDDD…LNCG), 1827 to 1898 (YDTH…KSCT), 1904 to 1976 (TTTH…KSCA), 1984 to 2044 (YDDD…KSCD), 2080 to 2149 (FATD…KNCS), 2155 to 2215 (LTSE…KDCQ), 2219 to 2286 (GTTH…TSCK), 2290 to 2355 (WNND…TSCA), 2359 to 2430 (YTTH…QSCA), 2434 to 2500 (GTTH…LTCA), and 2505 to 2573 (GTAT…TACT).

The protein localises to the cell membrane. Its function is as follows. This protein is the surface antigen or immobilization antigen of Paramecium primaurelia. This chain is G surface protein, allelic form 156 (156G), found in Paramecium primaurelia.